The following is a 295-amino-acid chain: Protein gurken (295 aa).

Residues 1 to 26 (MMQIPFTRIFKVIFVLSTIVAVTDCC) form the signal peptide. The Extracellular segment spans residues 27–247 (SSRILLLREH…TAQRKVRMAH (221 aa)). Disordered regions lie at residues 78 to 111 (EASA…SIAA) and 124 to 175 (TDTW…NDKE). Residues 124 to 139 (TDTWLASESSTPITDS) show a composition bias toward polar residues. 2 stretches are compositionally biased toward low complexity: residues 140–152 (ETVT…THTG) and 159–171 (SSSS…TPSP). One can recognise an EGF-like domain in the interval 179–224 (QMLPCSEAYNTSFCLNGGHCFQHPMVNNTVFHSCLCVNDYDGERCA). Cystine bridges form between C183/C198, C192/C212, and C214/C223. 2 N-linked (GlcNAc...) asparagine glycosylation sites follow: N188 and N205. An interaction with cni region spans residues 215 to 245 (VNDYDGERCAYKSWNGDYIYSPPTAQRKVRM). A helical transmembrane segment spans residues 248–268 (IVFSFPVLLMLSSLYVLFAAV). Residues 269-295 (FMLRNVPDYRRKQQQLHLHKQRFFVRC) are Cytoplasmic-facing.

In terms of assembly, interacts with cni. Expressed in nurse cells and oocyte up to oogenesis stage 7. Specifically accumulates in dorsal anterior corner of the oocyte during stages 9/10, at later stages expression is seen as an anterior ring. In stage 10 ovaries, it is concentrated between the oocyte nucleus and the adjacent oolemma. During vitellogenesis stage it can be detected at the oocyte surface, especially on the microvilli. It is also found at the microvilli covering the apical surface of the follicular epithelium and within follicle cells.

The protein resides in the cell membrane. In terms of biological role, critical for defining the anterior-posterior and dorsal-ventral axes of the egg. May signal directly to dorsal follicle cells through the receptor torpedo (top). During oogenesis this signaling pathway instructs follicle cells to follow a dorsal pathway of development rather than the default ventral pathway. This is Protein gurken (grk) from Drosophila melanogaster (Fruit fly).